We begin with the raw amino-acid sequence, 567 residues long: Eukaryotic translation initiation factor 3 subunit D (567 aa).

2 disordered regions span residues 12 to 34 (PVKS…YAPF) and 122 to 160 (GQNV…RGRR). Gly residues predominate over residues 128–142 (GGRGGRYGSSGGRGA). An RNA gate region spans residues 300-314 (PFDYLTVNENAYDSP).

This sequence belongs to the eIF-3 subunit D family. Component of the eukaryotic translation initiation factor 3 (eIF-3) complex. The eIF-3 complex appears to include tif32/eif3a, SPAC25G10.08/eif3b, tif33/eif3c, SPBC4C3.07/eif3f, tif35/eif3g and sum1/eif3i. This set of common subunits may also associate exclusively with either moe1/eif3d and int6/eif3e, or with SPAC821.05/eif3h and SPAC1751.03/eif3m. The eIF-3 complex may also include SPAC3A12.13c/eif3j.

Its subcellular location is the cytoplasm. Its function is as follows. mRNA cap-binding component of the eukaryotic translation initiation factor 3 (eIF-3) complex, which is involved in protein synthesis of a specialized repertoire of mRNAs and, together with other initiation factors, stimulates binding of mRNA and methionyl-tRNAi to the 40S ribosome. The eIF-3 complex specifically targets and initiates translation of a subset of mRNAs involved in cell proliferation. In the eIF-3 complex, eif3d specifically recognizes and binds the 7-methylguanosine cap of a subset of mRNAs. This chain is Eukaryotic translation initiation factor 3 subunit D (moe1), found in Schizosaccharomyces pombe (strain 972 / ATCC 24843) (Fission yeast).